Consider the following 194-residue polypeptide: UPF0215 protein PF2042 (194 aa).

Belongs to the UPF0215 family.

This is UPF0215 protein PF2042 from Pyrococcus furiosus (strain ATCC 43587 / DSM 3638 / JCM 8422 / Vc1).